Here is a 310-residue protein sequence, read N- to C-terminus: Conjugation stage-specific protein (310 aa).

It belongs to the archaeal Rpo3/eukaryotic RPB3 RNA polymerase subunit family.

The protein localises to the nucleus. May be a stage-specific RNA polymerase subunit. The chain is Conjugation stage-specific protein (CNJC) from Tetrahymena thermophila.